The sequence spans 503 residues: ATP synthase subunit alpha (503 aa).

An ATP-binding site is contributed by 170–177; it reads GDKQTGKT.

This sequence belongs to the ATPase alpha/beta chains family. As to quaternary structure, F-type ATPases have 2 components, CF(1) - the catalytic core - and CF(0) - the membrane proton channel. CF(1) has five subunits: alpha(3), beta(3), gamma(1), delta(1), epsilon(1). CF(0) has three main subunits: a(1), b(2) and c(9-12). The alpha and beta chains form an alternating ring which encloses part of the gamma chain. CF(1) is attached to CF(0) by a central stalk formed by the gamma and epsilon chains, while a peripheral stalk is formed by the delta and b chains.

It is found in the cell inner membrane. The catalysed reaction is ATP + H2O + 4 H(+)(in) = ADP + phosphate + 5 H(+)(out). Produces ATP from ADP in the presence of a proton gradient across the membrane. The alpha chain is a regulatory subunit. The protein is ATP synthase subunit alpha of Helicobacter acinonychis (strain Sheeba).